Consider the following 351-residue polypeptide: Serine/threonine-protein kinase ZRK1 (351 aa).

In terms of domain architecture, Protein kinase spans 60-347 (FDSSCFVSQD…KELKQIEASL (288 aa)). Residues 66-74 (VSQDVYYKW) and lysine 87 contribute to the ATP site. Aspartate 191 acts as the Proton acceptor in catalysis.

This sequence belongs to the protein kinase superfamily. Ser/Thr protein kinase family. ZRK subfamily. Component of a stable high-order oligomeric complex made of RKS1 and RPP13L4/ZAR1 which recruits Xanthomonas campestris effector XopAC/AvrAC-mediated uridylylated PBL2 in the presence of ATP to form a wheel-like pentameric resistosome; this complex triggers immunity toward X.campestris in vascular tissues. Interacts with RPP13L4/ZAR1 and uridylylated PBL2. Expressed at high levels in germinating seeds and at lower levels in adult leaves.

It carries out the reaction L-seryl-[protein] + ATP = O-phospho-L-seryl-[protein] + ADP + H(+). The catalysed reaction is L-threonyl-[protein] + ATP = O-phospho-L-threonyl-[protein] + ADP + H(+). Its function is as follows. Serine/threonine-protein kinase that confers a broad-spectrum quantitative disease resistance (QDR) to the pathogenic biotrophic bacteria Xanthomonas campestris (e.g. pv. campestris (Xcc), pv. raphani, pv. armoriaceae and pv. incanae) by restricting bacterial spread to the vascular system from the infection site; X.campestris causes black rot disease in crops. Seems to not have any kinase activity. This Arabidopsis thaliana (Mouse-ear cress) protein is Serine/threonine-protein kinase ZRK1.